Reading from the N-terminus, the 372-residue chain is tRNA-specific 2-thiouridylase MnmA (372 aa).

ATP-binding positions include 16-23 (GMSGGVDS) and Met-42. The tract at residues 102 to 104 (NPD) is interaction with target base in tRNA. Cys-107 (nucleophile) is an active-site residue. Cys-107 and Cys-205 are oxidised to a cystine. Residue Gly-132 coordinates ATP. The interaction with tRNA stretch occupies residues 155–157 (KDQ). Residue Cys-205 is the Cysteine persulfide intermediate of the active site. An interaction with tRNA region spans residues 317-318 (RY).

This sequence belongs to the MnmA/TRMU family.

The protein resides in the cytoplasm. It catalyses the reaction S-sulfanyl-L-cysteinyl-[protein] + uridine(34) in tRNA + AH2 + ATP = 2-thiouridine(34) in tRNA + L-cysteinyl-[protein] + A + AMP + diphosphate + H(+). Catalyzes the 2-thiolation of uridine at the wobble position (U34) of tRNA, leading to the formation of s(2)U34. The polypeptide is tRNA-specific 2-thiouridylase MnmA (Shewanella sp. (strain ANA-3)).